The primary structure comprises 291 residues: MKDYLVKALAFDGEVRAYSVRTTNTVSEAQRRHDTWRTASAALGRSLTAGTMMGAMLKGEQKLTIKVEGNGPIGPILVDAHANGDVRGYVTNPHVDFEGTEQGKLRVYQAVGTEGFVTVIKDIGMREPFIGQSPIVSGELGEDFTYYFAVSEQTPSSVGVGVLVNGDDSILAAGGFILQIMPGAQDETISFIEDRLQKIPPVSTLIEQGLSPEELLYAVLGEDKVKVLETMDVQFNCTCSRERIESVLISLGKTELEQVREEEEETEVHCHFCNERYKFSKEDITNLIENL.

2 cysteine pairs are disulfide-bonded: C237/C239 and C270/C273.

This sequence belongs to the HSP33 family. In terms of processing, under oxidizing conditions two disulfide bonds are formed involving the reactive cysteines. Under reducing conditions zinc is bound to the reactive cysteines and the protein is inactive.

Its subcellular location is the cytoplasm. Its function is as follows. Redox regulated molecular chaperone. Protects both thermally unfolding and oxidatively damaged proteins from irreversible aggregation. Plays an important role in the bacterial defense system toward oxidative stress. The protein is 33 kDa chaperonin of Bacillus cereus (strain B4264).